A 338-amino-acid polypeptide reads, in one-letter code: MLTERQLLILQTIIDDFIGSAQPVGSRTLAKKDEITYSSATIRNEMADLEELGFIEKTHSSSGRVPSEKGYRFYVDHLLAPQNLPNDEIVQIKDLFAERIFEAEKIAQQSAQILSELTNYTAIVLGPKLSTNKLKNVQIVPLDRQTAVAIIVTDTGHVQSKTITVPESVDLSDLEKMVNILNEKLSGVPMSELHNKIFKEIVTVLRGYVHNYDSAIKMLDGTFQVPLSEKIYFGGKANMLSQPEFHDIHKVRSLLTMIDNEAEFYDILRHKQVGIQVKIGRENSATAMEDCSLISATYSIGEEQLGTIAILGPTRMQYSRVISLLQLFTRQFTDGLKK.

The protein belongs to the HrcA family.

In terms of biological role, negative regulator of class I heat shock genes (grpE-dnaK-dnaJ and groELS operons). Prevents heat-shock induction of these operons. This chain is Heat-inducible transcription repressor HrcA, found in Bacillus cereus (strain AH820).